Here is a 442-residue protein sequence, read N- to C-terminus: 23S rRNA (uracil(1939)-C(5))-methyltransferase RlmD (442 aa).

The region spanning alanine 10–lysine 75 is the TRAM domain. Positions 88, 94, 97, and 173 each coordinate [4Fe-4S] cluster. Residues glutamine 276, phenylalanine 305, asparagine 310, glutamate 326, asparagine 353, and aspartate 374 each contribute to the S-adenosyl-L-methionine site. Cysteine 400 (nucleophile) is an active-site residue.

It belongs to the class I-like SAM-binding methyltransferase superfamily. RNA M5U methyltransferase family. RlmD subfamily.

The enzyme catalyses uridine(1939) in 23S rRNA + S-adenosyl-L-methionine = 5-methyluridine(1939) in 23S rRNA + S-adenosyl-L-homocysteine + H(+). Catalyzes the formation of 5-methyl-uridine at position 1939 (m5U1939) in 23S rRNA. The polypeptide is 23S rRNA (uracil(1939)-C(5))-methyltransferase RlmD (Haemophilus ducreyi (strain 35000HP / ATCC 700724)).